A 108-amino-acid chain; its full sequence is DNA-directed RNA polymerase subunit omega (108 aa).

It belongs to the RNA polymerase subunit omega family. The RNAP catalytic core consists of 2 alpha, 1 beta, 1 beta' and 1 omega subunit. When a sigma factor is associated with the core the holoenzyme is formed, which can initiate transcription.

It catalyses the reaction RNA(n) + a ribonucleoside 5'-triphosphate = RNA(n+1) + diphosphate. Its function is as follows. Promotes RNA polymerase assembly. Latches the N- and C-terminal regions of the beta' subunit thereby facilitating its interaction with the beta and alpha subunits. The sequence is that of DNA-directed RNA polymerase subunit omega from Mycolicibacterium paratuberculosis (strain ATCC BAA-968 / K-10) (Mycobacterium paratuberculosis).